The chain runs to 632 residues: Actin-related protein 8 (632 aa).

Over residues 1 to 30 (MTQAEREQENGKEKEKEREKEKEKEKEQRG) the composition is skewed to basic and acidic residues. A disordered region spans residues 1-43 (MTQAEREQENGKEKEKEREKEKEKEKEQRGIKRPIAPPVIPEP). Position 288-291 (288-291 (DVGD)) interacts with ATP. Disordered regions lie at residues 410–429 (MTSLQHRSQGDPEDPHDEHY) and 434–494 (QSKQ…GGAE). Over residues 434 to 443 (QSKQDQSSKA) the composition is skewed to low complexity.

It belongs to the actin family. ARP8 subfamily. In terms of assembly, component of the chromatin remodeling INO80 complex; specifically part of a complex module associated with the DBINO domain of INO80. Exists as monomers and dimers, but the dimer is most probably the biologically relevant form required for stable interactions with histones that exploits the twofold symmetry of the nucleosome core.

The protein localises to the nucleus. Its subcellular location is the chromosome. Plays an important role in the functional organization of mitotic chromosomes. Exhibits low basal ATPase activity, and unable to polymerize. Functionally, proposed core component of the chromatin remodeling INO80 complex which is involved in transcriptional regulation, DNA replication and probably DNA repair. Required for the recruitment of INO80 (and probably the INO80 complex) to sites of DNA damage Strongly prefer nucleosomes and H3-H4 tetramers over H2A-H2B dimers, suggesting it may act as a nucleosome recognition module within the complex. The chain is Actin-related protein 8 (actr8) from Salmo salar (Atlantic salmon).